The primary structure comprises 77 residues: Acyl carrier protein (77 aa).

The Carrier domain occupies 1–76; that stretch reads MSLEDDVKSI…DVITYIKTRQ (76 aa). An O-(pantetheine 4'-phosphoryl)serine modification is found at Ser36.

It belongs to the acyl carrier protein (ACP) family. In terms of processing, 4'-phosphopantetheine is transferred from CoA to a specific serine of apo-ACP by AcpS. This modification is essential for activity because fatty acids are bound in thioester linkage to the sulfhydryl of the prosthetic group.

It localises to the cytoplasm. It functions in the pathway lipid metabolism; fatty acid biosynthesis. Functionally, carrier of the growing fatty acid chain in fatty acid biosynthesis. This is Acyl carrier protein from Chlamydia caviae (strain ATCC VR-813 / DSM 19441 / 03DC25 / GPIC) (Chlamydophila caviae).